A 507-amino-acid chain; its full sequence is Phosphoprotein (507 aa).

Positions 1 to 48 are interaction with N0; that stretch reads MAEEQARHVKNGLECIRALKAEPIGSLAIGEAMAAWSEISDNPGQERA. Disordered stretches follow at residues 42–91, 133–163, 201–227, 252–273, and 285–307; these read NPGQ…DDTE, SGLD…TEGY, NNFP…SETP, TQCA…GNVP, and WTPE…GDHY. A phosphoserine mark is found at Ser-86 and Ser-151. Residues 144-160 are compositionally biased toward acidic residues; the sequence is GDNESENSDVDIGEPDT. Low complexity predominate over residues 260–270; sequence SEPSGPGAPAG. The segment covering 286-301 has biased composition (polar residues); that stretch reads TPESGTTISPRSQNNK. The segment at 304 to 376 is multimerization; sequence GDHYDDELFS…LSSIMIAIPG (73 aa). Interaction with the L polymerase regions lie at residues 361–377 and 396–410; these read STLE…IPGL and PIIG…AEVL. A x domain (XD) region spans residues 457–507; sequence GPVSRSVIRSIIKSSRIEEDRKRYLMTLLDDIKGANDLSKFHQMLMKIIMK. The tract at residues 459 to 507 is interaction with the nucleocapsid (N-RNA); that stretch reads VSRSVIRSIIKSSRIEEDRKRYLMTLLDDIKGANDLSKFHQMLMKIIMK.

The protein belongs to the morbillivirus P protein family. As to quaternary structure, homotetramer. Interacts (via multimerization domain and XD domain) with polymerase L; this interaction forms the polymerase L-P complex. Interacts (via N-terminus) with N0 (via Ncore); this interaction allows P to chaperon N0 to avoid N polymerization and non-specific RNA binding before encapsidation. Interacts (via C-terminus) with N-RNA template (via Ntail); this interaction maintains the P/L complex anchored to the nucleocapsid template during the sequential transcription. Interacts (via C-terminus) with protein C this interaction allows C to associate with the ribonucleocapsid. In terms of processing, phosphorylation on serines by host CK2 is necessary for the formation of viral factories.

In terms of biological role, essential cofactor of the RNA polymerase L that plays a central role in the transcription and replication by forming the polymerase complex with RNA polymerase L and recruiting L to the genomic N-RNA template for RNA synthesis. Also plays a central role in the encapsidation of nascent RNA chains by forming the encapsidation complex with the nucleocapsid protein N (N-P complex). Acts as a chaperone for newly synthesized free N protein, so-called N0, allowing encapsidation of nascent RNA chains during replication. The nucleoprotein protein N prevents excessive phosphorylation of P, which leads to down-regulation of viral transcription/ replication. Participates, together with N, in the formation of viral factories (viroplasms), which are large inclusions in the host cytoplasm where replication takes place. This chain is Phosphoprotein (P/V), found in Homo sapiens (Human).